Here is a 178-residue protein sequence, read N- to C-terminus: Adenine phosphoribosyltransferase (178 aa).

This sequence belongs to the purine/pyrimidine phosphoribosyltransferase family. In terms of assembly, homodimer.

It is found in the cytoplasm. The enzyme catalyses AMP + diphosphate = 5-phospho-alpha-D-ribose 1-diphosphate + adenine. The protein operates within purine metabolism; AMP biosynthesis via salvage pathway; AMP from adenine: step 1/1. Functionally, catalyzes a salvage reaction resulting in the formation of AMP, that is energically less costly than de novo synthesis. This is Adenine phosphoribosyltransferase from Bacteroides fragilis (strain YCH46).